The primary structure comprises 303 residues: N-acetyl-D-glucosamine kinase (303 aa).

Residues 4 to 11 and 133 to 140 each bind ATP; these read GFDIGGTK and GVGGGLVL. Residues histidine 157, cysteine 177, cysteine 179, and cysteine 184 each coordinate Zn(2+).

It belongs to the ROK (NagC/XylR) family. NagK subfamily.

The enzyme catalyses N-acetyl-D-glucosamine + ATP = N-acetyl-D-glucosamine 6-phosphate + ADP + H(+). It participates in cell wall biogenesis; peptidoglycan recycling. Functionally, catalyzes the phosphorylation of N-acetyl-D-glucosamine (GlcNAc) derived from cell-wall degradation, yielding GlcNAc-6-P. This is N-acetyl-D-glucosamine kinase from Salmonella agona (strain SL483).